We begin with the raw amino-acid sequence, 122 residues long: Large ribosomal subunit protein bL12 (122 aa).

The protein belongs to the bacterial ribosomal protein bL12 family. In terms of assembly, homodimer. Part of the ribosomal stalk of the 50S ribosomal subunit. Forms a multimeric L10(L12)X complex, where L10 forms an elongated spine to which 2 to 4 L12 dimers bind in a sequential fashion. Binds GTP-bound translation factors.

Functionally, forms part of the ribosomal stalk which helps the ribosome interact with GTP-bound translation factors. Is thus essential for accurate translation. The sequence is that of Large ribosomal subunit protein bL12 from Shewanella denitrificans (strain OS217 / ATCC BAA-1090 / DSM 15013).